The primary structure comprises 664 residues: Macoilin (664 aa).

The next 4 helical transmembrane spans lie at Thr-28 to Leu-48, Ala-75 to Ile-95, Val-120 to Phe-140, and Phe-154 to Val-174. Positions Arg-253 to Lys-265 are enriched in basic and acidic residues. The disordered stretch occupies residues Arg-253–Asn-274. Phosphoserine is present on Ser-305. The span at Lys-320–Ser-348 shows a compositional bias: polar residues. The tract at residues Lys-320 to Asn-375 is disordered. N-linked (GlcNAc...) asparagine glycosylation is present at Asn-324. Position 332 is a phosphoserine (Ser-332). 2 N-linked (GlcNAc...) asparagine glycosylation sites follow: Asn-340 and Asn-452. The segment at Thr-630–Lys-664 is disordered. 2 positions are modified to phosphoserine: Ser-631 and Ser-634. A glycan (N-linked (GlcNAc...) asparagine) is linked at Asn-655.

This sequence belongs to the macoilin family.

Its subcellular location is the rough endoplasmic reticulum membrane. It is found in the nucleus membrane. Its function is as follows. Plays a role in the regulation of neuronal activity. This is Macoilin (MACO1) from Canis lupus familiaris (Dog).